The primary structure comprises 1178 residues: DNA-directed RNA polymerase subunit beta' (1178 aa).

Zn(2+) contacts are provided by cysteine 60, cysteine 62, cysteine 75, and cysteine 78. The Mg(2+) site is built by aspartate 450, aspartate 452, and aspartate 454. Zn(2+) is bound by residues cysteine 795, cysteine 869, cysteine 876, and cysteine 879.

This sequence belongs to the RNA polymerase beta' chain family. The RNAP catalytic core consists of 2 alpha, 1 beta, 1 beta' and 1 omega subunit. When a sigma factor is associated with the core the holoenzyme is formed, which can initiate transcription. Mg(2+) is required as a cofactor. It depends on Zn(2+) as a cofactor.

It carries out the reaction RNA(n) + a ribonucleoside 5'-triphosphate = RNA(n+1) + diphosphate. Its function is as follows. DNA-dependent RNA polymerase catalyzes the transcription of DNA into RNA using the four ribonucleoside triphosphates as substrates. This is DNA-directed RNA polymerase subunit beta' from Clostridium perfringens (strain ATCC 13124 / DSM 756 / JCM 1290 / NCIMB 6125 / NCTC 8237 / Type A).